Consider the following 354-residue polypeptide: Neutral protease 2 homolog MEP3 (354 aa).

Residues 1 to 19 (MHFTSSLLALVALTTQALA) form the signal peptide. The propeptide occupies 20–179 (FPLNDLPKRD…QSAIPKLEKR (160 aa)). Cystine bridges form between cysteine 186–cysteine 256 and cysteine 263–cysteine 281. Histidine 305 provides a ligand contact to Zn(2+). Residue glutamate 306 is part of the active site. The Zn(2+) site is built by histidine 309 and aspartate 320.

This sequence belongs to the peptidase M35 family. The cofactor is Zn(2+).

Its subcellular location is the secreted. It carries out the reaction Preferential cleavage of bonds with hydrophobic residues in P1'. Also 3-Asn-|-Gln-4 and 8-Gly-|-Ser-9 bonds in insulin B chain.. In terms of biological role, secreted metalloproteinase that allows assimilation of proteinaceous substrates. Shows high activities on basic nuclear substrates such as histone and protamine. May be involved in virulence. The chain is Neutral protease 2 homolog MEP3 (MEP3) from Coccidioides posadasii (strain C735) (Valley fever fungus).